A 2201-amino-acid polypeptide reads, in one-letter code: Activating signal cointegrator 1 complex subunit 3 (2201 aa).

Serine 12 is modified (phosphoserine). 2 coiled-coil regions span residues 18-81 (KQDN…KQIV) and 328-356 (IQSE…KAGE). The 184-residue stretch at 486–669 (ETAYNTNENM…FLHVNPCIGL (184 aa)) folds into the Helicase ATP-binding 1 domain. Position 499 to 506 (499 to 506 (APTGAGKT)) interacts with ATP. Lysine 572 carries the N6-acetyllysine modification. The DEVH box motif lies at 611-614 (DEVH). A Helicase C-terminal 1 domain is found at 696 to 914 (QLNNMDEVCY…GTVTNVEEAV (219 aa)). One can recognise an SEC63 1 domain in the interval 978-1287 (STDLGRTASH…GAEAVCIINF (310 aa)). Residues 1336–1511 (HTLYHTDCNV…WLNIRQMGLF (176 aa)) enclose the Helicase ATP-binding 2 domain. Position 1349–1356 (1349–1356 (APTGSGKT)) interacts with ATP. Residues 1453–1456 (DEIH) carry the DEIH box motif. In terms of domain architecture, Helicase C-terminal 2 spans 1544–1739 (PTFQAIRSHS…VLSDHLNAEI (196 aa)). In terms of domain architecture, SEC63 2 spans 1812–2176 (PLTYGRIASY…LGLDQQYDIH (365 aa)).

The protein belongs to the helicase family. In terms of assembly, identified in the ASCC complex that contains ASCC1, ASCC2 and ASCC3. Functions as a scaffolding subunit that interacts directly with both ASCC1 and ASCC2. Interacts directly with ALKBH3, and thereby recruits ALKBH3 to the ASCC complex. Part of the ASC-1/TRIP4 complex, that contains TRIP4, ASCC1, ASCC2 and ASCC3. Part of the RQT (ribosome quality control trigger) complex, that contains ASCC2, ASCC3 and TRIP4. Associates with ribosomes; recruited to collided ribosomes. Interacts with ZCCHC4. Interacts with ZNF598. Interacts with RPS3.

It localises to the nucleus. Its subcellular location is the nucleus speckle. The protein localises to the cytoplasm. It is found in the cytosol. It catalyses the reaction Couples ATP hydrolysis with the unwinding of duplex DNA by translocating in the 3'-5' direction.. It carries out the reaction ATP + H2O = ADP + phosphate + H(+). In terms of biological role, ATPase involved both in DNA repair and rescue of stalled ribosomes. 3'-5' DNA helicase involved in repair of alkylated DNA: promotes DNA unwinding to generate single-stranded substrate needed for ALKBH3, enabling ALKBH3 to process alkylated N3-methylcytosine (3mC) within double-stranded regions. Also involved in activation of the ribosome quality control (RQC) pathway, a pathway that degrades nascent peptide chains during problematic translation. Drives the splitting of stalled ribosomes that are ubiquitinated in a ZNF598-dependent manner, as part of the ribosome quality control trigger (RQT) complex. Part of the ASC-1 complex that enhances NF-kappa-B, SRF and AP1 transactivation. This chain is Activating signal cointegrator 1 complex subunit 3 (ascc3), found in Bos taurus (Bovine).